Consider the following 211-residue polypeptide: Small ribosomal subunit protein eS1 (211 aa).

This sequence belongs to the eukaryotic ribosomal protein eS1 family.

In Archaeoglobus fulgidus (strain ATCC 49558 / DSM 4304 / JCM 9628 / NBRC 100126 / VC-16), this protein is Small ribosomal subunit protein eS1.